Here is a 298-residue protein sequence, read N- to C-terminus: Putative GATA zinc finger domain-containing protein 25 (298 aa).

The stretch at 4–37 (DNKNKNDNYQESIQRIVNQRNNLLKEIENKINQQ) forms a coiled coil. The interval 148–227 (QQQLQQSHTK…RGRPSKPKPE (80 aa)) is disordered. Over residues 183–202 (EENEENEENEENEENEENEE) the composition is skewed to acidic residues. A compositionally biased stretch (basic and acidic residues) spans 203–212 (NKEKDVEVAK). Residues 214-223 (NKPKRGRPSK) are compositionally biased toward basic residues. A GATA-type; degenerate zinc finger spans residues 229–256 (CFRYGTRSCPYWRKNVIKGELVDVCNAC).

This chain is Putative GATA zinc finger domain-containing protein 25 (gtaY), found in Dictyostelium discoideum (Social amoeba).